We begin with the raw amino-acid sequence, 212 residues long: Probable GTP-binding protein EngB (212 aa).

The 173-residue stretch at 38–210 (SLPEIAFVGK…KASLAKCIKP (173 aa)) folds into the EngB-type G domain. GTP is bound by residues 46–53 (GKSNVGKS), 73–77 (GRTRQ), 91–94 (DLPG), 158–161 (TKSD), and 189–191 (VSN). Positions 53 and 75 each coordinate Mg(2+).

This sequence belongs to the TRAFAC class TrmE-Era-EngA-EngB-Septin-like GTPase superfamily. EngB GTPase family. The cofactor is Mg(2+).

Functionally, necessary for normal cell division and for the maintenance of normal septation. The polypeptide is Probable GTP-binding protein EngB (Rickettsia africae (strain ESF-5)).